We begin with the raw amino-acid sequence, 485 residues long: Cysteine--tRNA ligase (485 aa).

Position 27 (Cys27) interacts with Zn(2+). Residues 29–39 (ITAYDLCHIGH) carry the 'HIGH' region motif. Zn(2+) is bound by residues Cys208, His233, and Glu237. The 'KMSKS' region motif lies at 265–269 (KMSKS). ATP is bound at residue Lys268.

This sequence belongs to the class-I aminoacyl-tRNA synthetase family. As to quaternary structure, monomer. It depends on Zn(2+) as a cofactor.

Its subcellular location is the cytoplasm. It carries out the reaction tRNA(Cys) + L-cysteine + ATP = L-cysteinyl-tRNA(Cys) + AMP + diphosphate. This chain is Cysteine--tRNA ligase, found in Nitratidesulfovibrio vulgaris (strain DSM 19637 / Miyazaki F) (Desulfovibrio vulgaris).